A 488-amino-acid polypeptide reads, in one-letter code: 3-octaprenyl-4-hydroxybenzoate carboxy-lyase (488 aa).

Asn-172 contributes to the Mn(2+) binding site. Prenylated FMN is bound by residues 175 to 177 (IYR), 189 to 191 (RWL), and 194 to 195 (RG). Residue Glu-238 coordinates Mn(2+). Asp-287 (proton donor) is an active-site residue.

Belongs to the UbiD family. In terms of assembly, homohexamer. Prenylated FMN serves as cofactor. It depends on Mn(2+) as a cofactor.

It is found in the cell membrane. It catalyses the reaction a 4-hydroxy-3-(all-trans-polyprenyl)benzoate + H(+) = a 2-(all-trans-polyprenyl)phenol + CO2. It functions in the pathway cofactor biosynthesis; ubiquinone biosynthesis. In terms of biological role, catalyzes the decarboxylation of 3-octaprenyl-4-hydroxy benzoate to 2-octaprenylphenol, an intermediate step in ubiquinone biosynthesis. The sequence is that of 3-octaprenyl-4-hydroxybenzoate carboxy-lyase from Pseudomonas fluorescens (strain Pf0-1).